The primary structure comprises 341 residues: AB hydrolase superfamily protein C1039.03 (341 aa).

The protein belongs to the AB hydrolase superfamily.

The protein localises to the cytoplasm. The protein resides in the nucleus. The sequence is that of AB hydrolase superfamily protein C1039.03 from Schizosaccharomyces pombe (strain 972 / ATCC 24843) (Fission yeast).